Here is a 535-residue protein sequence, read N- to C-terminus: 4-hydroxy-3-methylbut-2-enyl diphosphate reductase, apicoplast (535 aa).

[4Fe-4S] cluster is bound at residue Cys231. Residues His260 and His293 each contribute to the (2E)-4-hydroxy-3-methylbut-2-enyl diphosphate site. Dimethylallyl diphosphate-binding residues include His260 and His293. Residues His260 and His293 each contribute to the isopentenyl diphosphate site. Position 315 (Cys315) interacts with [4Fe-4S] cluster. His343 serves as a coordination point for (2E)-4-hydroxy-3-methylbut-2-enyl diphosphate. Residue His343 coordinates dimethylallyl diphosphate. His343 is an isopentenyl diphosphate binding site. Catalysis depends on Glu345, which acts as the Proton donor. A (2E)-4-hydroxy-3-methylbut-2-enyl diphosphate-binding site is contributed by Thr383. Residue Cys413 participates in [4Fe-4S] cluster binding. (2E)-4-hydroxy-3-methylbut-2-enyl diphosphate contacts are provided by Ser441, Ser442, Asn443, and Ser485. Dimethylallyl diphosphate is bound by residues Ser441, Ser442, Asn443, and Ser485. Residues Ser441, Ser442, Asn443, and Ser485 each coordinate isopentenyl diphosphate.

Belongs to the IspH family. Interacts with Fd/ferredoxin. Requires [4Fe-4S] cluster as cofactor.

Its subcellular location is the plastid. The protein localises to the apicoplast. It carries out the reaction dimethylallyl diphosphate + 2 oxidized [2Fe-2S]-[ferredoxin] + H2O = (2E)-4-hydroxy-3-methylbut-2-enyl diphosphate + 2 reduced [2Fe-2S]-[ferredoxin] + 2 H(+). The catalysed reaction is isopentenyl diphosphate + 2 oxidized [2Fe-2S]-[ferredoxin] + H2O = (2E)-4-hydroxy-3-methylbut-2-enyl diphosphate + 2 reduced [2Fe-2S]-[ferredoxin] + 2 H(+). Its pathway is isoprenoid biosynthesis; dimethylallyl diphosphate biosynthesis; dimethylallyl diphosphate from (2E)-4-hydroxy-3-methylbutenyl diphosphate: step 1/1. The protein operates within isoprenoid biosynthesis; isopentenyl diphosphate biosynthesis via DXP pathway; isopentenyl diphosphate from 1-deoxy-D-xylulose 5-phosphate: step 6/6. Catalyzes the conversion of 1-hydroxy-2-methyl-2-(E)-butenyl 4-diphosphate (HMBPP) into a mixture of isopentenyl diphosphate (IPP) and dimethylallyl diphosphate (DMAPP). Acts in the terminal step of the DOXP/MEP pathway for isoprenoid precursor biosynthesis. This chain is 4-hydroxy-3-methylbut-2-enyl diphosphate reductase, apicoplast, found in Plasmodium falciparum (isolate 3D7).